Here is a 309-residue protein sequence, read N- to C-terminus: Zinc transporter ZIP2 (309 aa).

At 1–8 (MEVLLGVK) the chain is on the extracellular side. The helical transmembrane segment at 9–29 (IGCLLALLVLTLGCGLTPIYV) threads the bilayer. Topologically, residues 30–43 (KWFQMDAATGHHHR) are cytoplasmic. A helical transmembrane segment spans residues 44-64 (VLSLLGCTSAGVFLGAGLMHM). Residues 65 to 103 (TAEALEGIESEIQKFVEQNSTGSKGNSSRDAASSYVEYP) lie on the Extracellular side of the membrane. The helical transmembrane segment at 104-124 (YGELVISLGFFFVFLLESLAL) threads the bilayer. Over 125-164 (QCCHGAAGGSTVQEEEWGGTHAFGFHKHPAVPSPSRGPLR) the chain is Cytoplasmic. A helical transmembrane segment spans residues 165-185 (ALVLLLSLSFHSVFEGLAVGL). The Zn(2+) site is built by H175 and E179. Topologically, residues 186–191 (QATVAA) are extracellular. The helical transmembrane segment at 192-212 (TIQLCVAVLAHKGLVVFSVGL) threads the bilayer. H202 is a binding site for Zn(2+). Residues 213–225 (RLGKIGTGPRWAT) are Cytoplasmic-facing. A helical membrane pass occupies residues 226 to 246 (FCILSLALMSPVGLALGLTVA). Residues 247–258 (GGASGQTQGLAQ) are Extracellular-facing. The chain crosses the membrane as a helical span at residues 259–279 (AVLEGIAAGTFLYVTFLEILP). E276 contributes to the Zn(2+) binding site. Residues 280–288 (RELACPEAP) lie on the Cytoplasmic side of the membrane. Residues 289–309 (LAKYSCVAAGFAFMALIALWA) traverse the membrane as a helical segment.

Belongs to the ZIP transporter (TC 2.A.5) family. As to expression, high expression in the liver, skin and ovary.

It localises to the cell membrane. The enzyme catalyses Zn(2+)(in) = Zn(2+)(out). The catalysed reaction is Cd(2+)(in) = Cd(2+)(out). Its function is as follows. Transporter for the divalent cation Zn(2+). Mediates the influx of Zn(2+) into cells from extracellular space. The Zn(2+) uniporter activity is independent of H(+)-driving force, but is modulated by extracellular pH and membrane potential. Transports also other divalent cations Zn(2+), Cd2(+), Cu2(+), Co2(+) in the order of decreasing affinity, respectively. In the skin, aids in the differentiation of keratinocytes in the epidermis. This Mus musculus (Mouse) protein is Zinc transporter ZIP2 (Slc39a2).